A 156-amino-acid polypeptide reads, in one-letter code: Small ribosomal subunit protein uS7 (156 aa).

The protein belongs to the universal ribosomal protein uS7 family. In terms of assembly, part of the 30S ribosomal subunit. Contacts proteins S9 and S11.

Its function is as follows. One of the primary rRNA binding proteins, it binds directly to 16S rRNA where it nucleates assembly of the head domain of the 30S subunit. Is located at the subunit interface close to the decoding center, probably blocks exit of the E-site tRNA. The chain is Small ribosomal subunit protein uS7 from Halalkalibacterium halodurans (strain ATCC BAA-125 / DSM 18197 / FERM 7344 / JCM 9153 / C-125) (Bacillus halodurans).